Here is a 330-residue protein sequence, read N- to C-terminus: Aspartate--ammonia ligase (330 aa).

The protein belongs to the class-II aminoacyl-tRNA synthetase family. AsnA subfamily.

It localises to the cytoplasm. The catalysed reaction is L-aspartate + NH4(+) + ATP = L-asparagine + AMP + diphosphate + H(+). The protein operates within amino-acid biosynthesis; L-asparagine biosynthesis; L-asparagine from L-aspartate (ammonia route): step 1/1. This chain is Aspartate--ammonia ligase, found in Streptococcus equi subsp. zooepidemicus (strain H70).